We begin with the raw amino-acid sequence, 770 residues long: MSNEVETSATNGQPDQQAAPKAPSKKEKKKGPEKTDEYLLARFKGDGVKYKAKLIGIDDVPDARGDKMSQDSMMKLKGMAAAGRSQGQHKQRIWVNISLSGIKIIDEKTGVIEHEHPVNKISFIARDVTDNRAFGYVCGGEGQHQFFAIKTGQQAEPLVVDLKDLFQVIYNVKKKEEEKKKIEEASKAVENGSEALMILDDQTNKLKSGVDQMDLFGDMSTPPDLNSPTESKDILLVDLNSEIDTNQNSLRENPFLTNGITSCSLPRPTPQASFLPENAFSANLNFFPTPNPDPFRDDPFTQPDQSTPSSFDSLKSPDQKKENSSSSSTPLSNGPLNGDVDYFGQQFDQISNRTGKQEAQAGPWPFSSSQTQPAVRTQNGVSEREQNGFSVKSSPNPFVGSPPKGLSIQNGVKQDLESSVQSSPHDSIAIIPPPQSTKPGRGRRTAKSSANDLLASDIFAPPVSEPSGQASPTGQPTALQPNPLDLFKTSAPAPVGPLVGLGGVTVTLPQAGPWNTASLVFNQSPSMAPGAMMGGQPSGFSQPVIFGTSPAVSGWNQPSPFAASTPPPVPVVWGPSASVAPNAWSTTSPLGNPFQSNIFPAPAVSTQPPSMHSSLLVTPPQPPPRAGPPKDISSDAFTALDPLGDKEIKDVKEMFKDFQLRQPPAVPARKGEQTSSGTLSAFASYFNSKVGIPQENADHDDFDANQLLNKINEPPKPAPRQVSLPVTKSTDNAFENPFFKDSFGSSQASVASSQPVSSEMYRDPFGNPFA.

A compositionally biased stretch (polar residues) spans 1 to 16 (MSNEVETSATNGQPDQ). The disordered stretch occupies residues 1–38 (MSNEVETSATNGQPDQQAAPKAPSKKEKKKGPEKTDEY). An N-acetylserine modification is found at Ser-2. Ser-2 bears the Phosphoserine mark. Positions 45–196 (GDGVKYKAKL…KAVENGSEAL (152 aa)) constitute a PID domain. The residue at position 170 (Tyr-170) is a Phosphotyrosine. Ser-193 is subject to Phosphoserine. Positions 230 to 447 (ESKDILLVDL…KPGRGRRTAK (218 aa)) are required for localization to clathrin-coated pits. 2 disordered regions span residues 284–482 (LNFF…LQPN) and 604–629 (VSTQ…AGPP). Short sequence motifs (DPF) lie at residues 293-295 (DPF) and 298-300 (DPF). The segment covering 302–313 (QPDQSTPSSFDS) has biased composition (polar residues). Ser-326 and Ser-328 each carry phosphoserine; in mitosis. Polar residues predominate over residues 366-396 (FSSSQTQPAVRTQNGVSEREQNGFSVKSSPN). A Phosphoserine modification is found at Ser-401. 3 stretches are compositionally biased toward polar residues: residues 407 to 425 (SIQN…SSPH), 466 to 480 (PSGQ…TALQ), and 604 to 616 (VSTQ…SSLL). The segment at 604–732 (VSTQPPSMHS…SLPVTKSTDN (129 aa)) is sufficient for interaction with GRB2. Positions 619–627 (PPQPPPRAG) are required for interaction with CSK. Residues 649–770 (KDVKEMFKDF…YRDPFGNPFA (122 aa)) form a required for interaction with MYO6 region. Residues 663-671 (PPAVPARKG) are required for interaction with GRB2 and CSK. Phosphoserine occurs at positions 675, 723, and 729. Residues 709 to 725 (NKINEPPKPAPRQVSLP) are sufficient for interaction with SH3KBP1 SH3 domain. A disordered region spans residues 742–770 (SFGSSQASVASSQPVSSEMYRDPFGNPFA). The segment covering 745–758 (SSQASVASSQPVSS) has biased composition (low complexity).

Interacts (via NPXY motif) with DAB2 (via PID domain). Can interact (via PID domain) with LDLR, APP, APLP1 and APLP2, and weakly with INPP5D (via NPXY motifs); the interaction is impaired by tyrosine phosphorylation of the respective NPXY motifs. Can weakly interact (via PID domain) with LRP1 (via NPXY motif); the interaction is enhanced by tyrosine phosphorylation of the NPXY motif. Interacts with LRP2 (via NPXY motif); the interaction is not affected by tyrosine phosphorylation of the NPXY motif. Interacts with clathrin; in vitro can assemble clathrin triskelia into polyhedral coats. Interacts with AP2A2, ITGB1, ITGB3, ITGB5, PIAS2, DAB2IP, NOSTRIN, FCHO1, DVL3, EPS15, ITSN1 and EPS15L1. Interacts with SH3KBP1 (via SH3 domains). Interacts with GRB2; competes with SOS1 for binding to GRB2 and the interaction is enhanced by EGF and NT-3 stimulation. Interacts with MAP3K7; the interaction is induced by TGF-beta stimulation and may mediate TGF-beta stimulated JNK activation. Interacts with AXIN1 and PPP1CA; the interactions are mutually exclusive. Interacts with the globular tail of MYO6. Interacts (via DPF motifs) with FCHO2; the interaction is direct and required for DAB2-mediated LDLR endocytosis. Interacts with LRP6; the interaction involves LRP6 phosphorylation by CK2 and sequesters LRP6 towards clathrin-mediated endocytosis. Associates with the TGF-beta receptor complex. Interacts with SMAD2 and SMAD3; the interactions are enhanced upon TGF-beta stimulation. Interacts with GRB2; the interaction is enhanced by EGF and NT-3 stimulation. Interacts with SRC; the interaction is enhanced by EGF stimulation. In terms of processing, phosphorylated. Phosphorylation during mitosis is leading to membrane displacement. In terms of tissue distribution, expressed in deep invaginations, inclusion cysts and the surface epithelial cells of the ovary. Also expressed in breast epithelial cells, spleen, thymus, prostate, testis, macrophages, fibroblasts, lung epithelial cells, placenta, brain stem, heart and small intestine. Expressed in kidney proximal tubular epithelial cells (at protein level).

It is found in the cytoplasm. The protein resides in the cytoplasmic vesicle. It localises to the clathrin-coated vesicle membrane. The protein localises to the membrane. Its subcellular location is the clathrin-coated pit. Adapter protein that functions as a clathrin-associated sorting protein (CLASP) required for clathrin-mediated endocytosis of selected cargo proteins. Can bind and assemble clathrin, and binds simultaneously to phosphatidylinositol 4,5-bisphosphate (PtdIns(4,5)P2) and cargos containing non-phosphorylated NPXY internalization motifs, such as the LDL receptor, to recruit them to clathrin-coated pits. Can function in clathrin-mediated endocytosis independently of the AP-2 complex. Involved in endocytosis of integrin beta-1; this function seems to redundant with the AP-2 complex and seems to require DAB2 binding to endocytosis accessory EH domain-containing proteins such as EPS15, EPS15L1 and ITSN1. Involved in endocytosis of cystic fibrosis transmembrane conductance regulator/CFTR. Involved in endocytosis of megalin/LRP2 lipoprotein receptor during embryonal development. Required for recycling of the TGF-beta receptor. Involved in CFTR trafficking to the late endosome. Involved in several receptor-mediated signaling pathways. Involved in TGF-beta receptor signaling and facilitates phosphorylation of the signal transducer SMAD2. Mediates TFG-beta-stimulated JNK activation. May inhibit the canoniocal Wnt/beta-catenin signaling pathway by stabilizing the beta-catenin destruction complex through a competing association with axin preventing its dephosphorylation through protein phosphatase 1 (PP1). Sequesters LRP6 towards clathrin-mediated endocytosis, leading to inhibition of Wnt/beta-catenin signaling. May activate non-canonical Wnt signaling. In cell surface growth factor/Ras signaling pathways proposed to inhibit ERK activation by interrupting the binding of GRB2 to SOS1 and to inhibit SRC by preventing its activating phosphorylation at 'Tyr-419'. Proposed to be involved in modulation of androgen receptor (AR) signaling mediated by SRC activation; seems to compete with AR for interaction with SRC. Plays a role in the CSF-1 signal transduction pathway. Plays a role in cellular differentiation. Involved in cell positioning and formation of visceral endoderm (VE) during embryogenesis and proposed to be required in the VE to respond to Nodal signaling coming from the epiblast. Required for the epithelial to mesenchymal transition, a process necessary for proper embryonic development. May be involved in myeloid cell differentiation and can induce macrophage adhesion and spreading. May act as a tumor suppressor. This Homo sapiens (Human) protein is Disabled homolog 2 (DAB2).